Reading from the N-terminus, the 749-residue chain is Transcription factor RFX3 (749 aa).

The segment at residues 183 to 258 (HLQWLLDNYE…YHYYGIRVKP (76 aa)) is a DNA-binding region (RFX-type winged-helix). The disordered stretch occupies residues 663 to 699 (VSPGNLDKDEGSEVESETDEDLDDSSEPRAKREKTEL). Acidic residues predominate over residues 674–687 (SEVESETDEDLDDS). The segment covering 688–698 (SEPRAKREKTE) has biased composition (basic and acidic residues).

Belongs to the RFX family. Heterodimer; heterodimerizes with RFX1 and RFX2, and RFX6. As to expression, expressed in ciliated cells of the node and in the ciliated ependymal cells of the subcommissural organ (SCO), choroid plexuses (CP) and ventricular walls during embryonic and postnatal development. Expressed in developing and mature pancreatic endocrine cells during embryogenesis and in adults (at protein level).

The protein resides in the nucleus. Functionally, transcription factor required for ciliogenesis and islet cell differentiation during endocrine pancreas development. Essential for the differentiation of nodal monocilia and left-right asymmetry specification during embryogenesis. Required for the biogenesis of motile cilia by governing growth and beating efficiency of motile cells. Also required for ciliated ependymal cell differentiation. Together with RFX6, participates in the differentiation of 4 of the 5 islet cell types during endocrine pancreas development, with the exception of pancreatic PP (polypeptide-producing) cells. Regulates transcription by forming a heterodimer with another RFX protein and binding to the X-box in the promoter of target genes. Regulates the expression of genes involved in ciliary assembly (DYNC2LI1, FOXJ1 and BBS4) and genes involved in ciliary motility (DNAH11, DNAH9 and DNAH5). Represses transcription of MAP1A in non-neuronal cells but not in neuronal cells. The chain is Transcription factor RFX3 (Rfx3) from Mus musculus (Mouse).